We begin with the raw amino-acid sequence, 446 residues long: Putative F-box protein At1g32660 (446 aa).

Basic and acidic residues-rich tracts occupy residues 1–12 (MKRKDDDQEDRS) and 43–57 (NKLE…NPSK). A disordered region spans residues 1–57 (MKRKDDDQEDRSCSSASKLDPIPLDLKMATVPTKSHMKKSHQNKLEEDEKEDTNPSK). The F-box domain occupies 57–107 (KLELDSLPLDLKMAILTRIPAKSLMKLRCVSKMWSSIIRSRGFIDSYYAIS).

The sequence is that of Putative F-box protein At1g32660 from Arabidopsis thaliana (Mouse-ear cress).